The following is a 624-amino-acid chain: DNA mismatch repair protein MutL (624 aa).

It belongs to the DNA mismatch repair MutL/HexB family.

Functionally, this protein is involved in the repair of mismatches in DNA. It is required for dam-dependent methyl-directed DNA mismatch repair. May act as a 'molecular matchmaker', a protein that promotes the formation of a stable complex between two or more DNA-binding proteins in an ATP-dependent manner without itself being part of a final effector complex. In Chlorobium phaeobacteroides (strain DSM 266 / SMG 266 / 2430), this protein is DNA mismatch repair protein MutL.